Reading from the N-terminus, the 379-residue chain is Dihydroflavonol 4-reductase (379 aa).

NADP(+)-binding residues include lysine 56 and tyrosine 175.

It belongs to the NAD(P)-dependent epimerase/dehydratase family. Dihydroflavonol-4-reductase subfamily. Expressed in both leaf and hypocotyl tissues.

It carries out the reaction a (2R,3S,4S)-leucoanthocyanidin + NADP(+) = a (2R,3R)-dihydroflavonol + NADPH + H(+). The catalysed reaction is (2S)-flavan-4-ol + NADP(+) = (2S)-flavanone + NADPH + H(+). The protein operates within pigment biosynthesis; anthocyanin biosynthesis. Its function is as follows. Bifunctional enzyme involved in flavonoid metabolism. The protein is Dihydroflavonol 4-reductase of Solanum lycopersicum (Tomato).